The following is a 438-amino-acid chain: GTPase Der (438 aa).

2 EngA-type G domains span residues 3–168 (PLIA…PCPE) and 179–354 (IKLA…INRR). GTP is bound by residues 9 to 16 (GRPNVGKS), 56 to 60 (DTGGY), 120 to 123 (NKVD), 185 to 192 (GRPNVGKS), 232 to 236 (DTAGL), and 297 to 300 (NKWD). Residues 355 to 438 (QKISTSNLNR…LPITMRFLRK (84 aa)) form the KH-like domain.

It belongs to the TRAFAC class TrmE-Era-EngA-EngB-Septin-like GTPase superfamily. EngA (Der) GTPase family. As to quaternary structure, associates with the 50S ribosomal subunit.

GTPase that plays an essential role in the late steps of ribosome biogenesis. This chain is GTPase Der, found in Chlorobaculum parvum (strain DSM 263 / NCIMB 8327) (Chlorobium vibrioforme subsp. thiosulfatophilum).